The chain runs to 172 residues: 3-hydroxydecanoyl-[acyl-carrier-protein] dehydratase (172 aa).

The active site involves H71.

The protein belongs to the thioester dehydratase family. FabA subfamily. As to quaternary structure, homodimer.

The protein resides in the cytoplasm. It catalyses the reaction a (3R)-hydroxyacyl-[ACP] = a (2E)-enoyl-[ACP] + H2O. It carries out the reaction (3R)-hydroxydecanoyl-[ACP] = (2E)-decenoyl-[ACP] + H2O. The enzyme catalyses (2E)-decenoyl-[ACP] = (3Z)-decenoyl-[ACP]. The protein operates within lipid metabolism; fatty acid biosynthesis. Necessary for the introduction of cis unsaturation into fatty acids. Catalyzes the dehydration of (3R)-3-hydroxydecanoyl-ACP to E-(2)-decenoyl-ACP and then its isomerization to Z-(3)-decenoyl-ACP. Can catalyze the dehydratase reaction for beta-hydroxyacyl-ACPs with saturated chain lengths up to 16:0, being most active on intermediate chain length. The sequence is that of 3-hydroxydecanoyl-[acyl-carrier-protein] dehydratase from Yersinia pseudotuberculosis serotype O:1b (strain IP 31758).